The chain runs to 261 residues: (R)-S-adenosyl-L-methionine hydrolase (261 aa).

Residues Asp12, Asp72, and Asn187 each coordinate adenosine. (R)-S-adenosyl-L-methionine contacts are provided by Asn187, Ser231, and Val239. Val239 contributes to the adenosine binding site.

This sequence belongs to the SAM hydrolase / SAM-dependent halogenase family.

The enzyme catalyses (R)-S-adenosyl-L-methionine + H2O = adenosine + L-methionine + H(+). Its function is as follows. Specifically hydrolyzes (R)-S-adenosyl-L-methionine ((R)-SAM), the inactive form of the ubiquitous cofactor SAM, into adenosine and L-methionine. Is stereoselective as it cannot use the active form of SAM, (S)-S-adenosyl-L-methionine, as substrate. Likely plays a role in preventing accumulation of (R)-S-adenosyl-L-methionine in cells; maintenance of (S)-S-denosyl-L-methionine homochirality is important for cellular health given that the (R)-form is largely inactive as a methyl donor and can function as an inhibitor of methyltransferases. The sequence is that of (R)-S-adenosyl-L-methionine hydrolase from Salinispora tropica (strain ATCC BAA-916 / DSM 44818 / JCM 13857 / NBRC 105044 / CNB-440).